Here is a 201-residue protein sequence, read N- to C-terminus: Small ribosomal subunit protein uS4c (201 aa).

The 62-residue stretch at 89 to 150 (MRLDNIVFRL…RQKSQAIITK (62 aa)) folds into the S4 RNA-binding domain.

It belongs to the universal ribosomal protein uS4 family. Part of the 30S ribosomal subunit. Contacts protein S5. The interaction surface between S4 and S5 is involved in control of translational fidelity.

The protein localises to the plastid. It is found in the chloroplast. In terms of biological role, one of the primary rRNA binding proteins, it binds directly to 16S rRNA where it nucleates assembly of the body of the 30S subunit. Its function is as follows. With S5 and S12 plays an important role in translational accuracy. The sequence is that of Small ribosomal subunit protein uS4c (rps4) from Funaria hygrometrica (Moss).